We begin with the raw amino-acid sequence, 407 residues long: Myeloid cell nuclear differentiation antigen (407 aa).

A Pyrin domain is found at 1–88 (MVNEYKKILL…VNNLRKEKSK (88 aa)). The disordered stretch occupies residues 108–207 (EVGLAAPAPT…RQVDARRNVP (100 aa)). The short motif at 131 to 137 (PVAQKRK) is the Nuclear localization signal element. Basic and acidic residues predominate over residues 139–148 (PNKEKTEAKR). The segment covering 177-190 (QTSSSTPSNTSFTP) has biased composition (low complexity). In terms of domain architecture, HIN-200 spans 196–394 (AQRQVDARRN…CGSHSFIKVI (199 aa)).

Participates in a ternary complex with YY1 and the YY1 target DNA element. Binds nucleolin and nucleophosmin/NPM/B23. Expressed constitutively in cells of the myeloid lineage. Found in promyelocyte stage cells as well as in all other stage cells including peripheral blood monocytes and granulocytes. Also appears in myeloblast cells in some cases of acute myeloid Leukemia.

The protein localises to the nucleus. It localises to the cytoplasm. In terms of biological role, may act as a transcriptional activator/repressor in the myeloid lineage. Plays a role in the granulocyte/monocyte cell-specific response to interferon. Stimulates the DNA binding of the transcriptional repressor protein YY1. The chain is Myeloid cell nuclear differentiation antigen (MNDA) from Homo sapiens (Human).